Consider the following 370-residue polypeptide: Chloromuconate cycloisomerase (370 aa).

K165 serves as the catalytic Proton acceptor. Mn(2+)-binding residues include D194, E220, and D245. The active-site Proton donor is the E323.

This sequence belongs to the mandelate racemase/muconate lactonizing enzyme family. Requires Mn(2+) as cofactor.

It carries out the reaction 2-[(2R)-2-chloro-2,5-dihydro-5-oxofuryl]acetate = 3-chloro-cis,cis-muconate + H(+). Its pathway is aromatic compound metabolism; 3-chlorocatechol degradation. The protein is Chloromuconate cycloisomerase (tfdD) of Delftia acidovorans (Pseudomonas acidovorans).